Reading from the N-terminus, the 303-residue chain is Recombination-associated protein RdgC (303 aa).

This sequence belongs to the RdgC family.

The protein resides in the cytoplasm. It is found in the nucleoid. Functionally, may be involved in recombination. The chain is Recombination-associated protein RdgC from Salmonella agona (strain SL483).